Consider the following 68-residue polypeptide: Serine rich endogenous peptide 22 (68 aa).

Residues 1–25 (MNKALVWLITLLFLIFSATPNRVLA) form the signal peptide. The SCOOP motif motif lies at 50–64 (KIGVGASNSGHSPGA). The short motif at 56 to 58 (SNS) is the SxS motif essential for MIK2 binding element.

This sequence belongs to the serine rich endogenous peptide (SCOOP) phytocytokine family. Interacts with MIK2 (via extracellular leucine-rich repeat domain); this interaction triggers the formation of complex between MIK2 and the BAK1/SERK3 and SERK4 coreceptors, and subsequent BAK1 activation by phosphorylation.

It localises to the cell membrane. It is found in the secreted. Its subcellular location is the extracellular space. The protein localises to the apoplast. Brassicaceae-specific phytocytokine (plant endogenous peptide released into the apoplast) perceived by MIK2 in a BAK1/SERK3 and SERK4 coreceptors-dependent manner, that modulates various physiological and antimicrobial processes including growth prevention and reactive oxygen species (ROS) response regulation. The protein is Serine rich endogenous peptide 22 of Arabidopsis thaliana (Mouse-ear cress).